Reading from the N-terminus, the 211-residue chain is Histidine biosynthesis bifunctional protein HisIE (211 aa).

The phosphoribosyl-AMP cyclohydrolase stretch occupies residues Met-1–Trp-122. Positions Leu-123–Lys-211 are phosphoribosyl-ATP pyrophosphohydrolase.

It in the N-terminal section; belongs to the PRA-CH family. In the C-terminal section; belongs to the PRA-PH family.

It is found in the cytoplasm. The enzyme catalyses 1-(5-phospho-beta-D-ribosyl)-ATP + H2O = 1-(5-phospho-beta-D-ribosyl)-5'-AMP + diphosphate + H(+). It catalyses the reaction 1-(5-phospho-beta-D-ribosyl)-5'-AMP + H2O = 1-(5-phospho-beta-D-ribosyl)-5-[(5-phospho-beta-D-ribosylamino)methylideneamino]imidazole-4-carboxamide. The protein operates within amino-acid biosynthesis; L-histidine biosynthesis; L-histidine from 5-phospho-alpha-D-ribose 1-diphosphate: step 2/9. Its pathway is amino-acid biosynthesis; L-histidine biosynthesis; L-histidine from 5-phospho-alpha-D-ribose 1-diphosphate: step 3/9. The chain is Histidine biosynthesis bifunctional protein HisIE from Vibrio vulnificus (strain CMCP6).